The following is a 227-amino-acid chain: Uracil-DNA glycosylase (227 aa).

D68 (proton acceptor) is an active-site residue.

This sequence belongs to the uracil-DNA glycosylase (UDG) superfamily. UNG family.

Its subcellular location is the cytoplasm. It catalyses the reaction Hydrolyzes single-stranded DNA or mismatched double-stranded DNA and polynucleotides, releasing free uracil.. Its function is as follows. Excises uracil residues from the DNA which can arise as a result of misincorporation of dUMP residues by DNA polymerase or due to deamination of cytosine. The polypeptide is Uracil-DNA glycosylase (Mycobacterium avium (strain 104)).